The following is a 238-amino-acid chain: uncharacterized protein (238 aa).

6 helical membrane-spanning segments follow: residues 24 to 44 (IFIA…YMKN), 78 to 98 (GFLL…LPGL), 109 to 129 (ILFI…IILV), 156 to 176 (FILL…IQVI), 188 to 208 (MYAY…IITP), and 216 to 236 (IIMS…LKIL).

Belongs to the TatC family.

It localises to the plastid. The protein resides in the chloroplast membrane. This is an uncharacterized protein from Gracilaria tenuistipitata var. liui (Red alga).